We begin with the raw amino-acid sequence, 109 residues long: Hainantoxin-XVIII.2 (109 aa).

Positions 1 to 18 are cleaved as a signal peptide; sequence MKLSIIIIVTSLVIAVVA. Residues 19-46 constitute a propeptide that is removed on maturation; sequence FPSKDSKAIENDKTEQRMEIVVQETARA. Disulfide bonds link C47–C62, C55–C68, C59–C108, and C61–C81.

It belongs to the neurotoxin 25 family. F7 subfamily. Expressed by the venom gland.

Its subcellular location is the secreted. Its function is as follows. Putative ion channel inhibitor. The protein is Hainantoxin-XVIII.2 of Cyriopagopus hainanus (Chinese bird spider).